Here is a 359-residue protein sequence, read N- to C-terminus: MKKYLALALIAPLLISCSTTKKGDTYNEAWVKDTNGFDILMGQFAHNIENIWGFKEVVIAGPKDYVKYTDQYQTRSHINFDDGTITIETIAGTEPAAHLRRAIIKTLLMGDDPSSVDLYSDVDDITISKEPFLYGQVVDNTGQPIRWEGRASNFADYLLKNRLKSRSNGLRIIYSVTINMVPNHLDKRAHKYLGMVRQASRKYGVDESLILAIMQTESSFNPYAVSRSDALGLMQVVQNTAGKDVFRSQGKSGTPSRSFLFDPASNIDTGTAYLAMLNNVYLGGIDNPTSRRYAVITAYNGGAGSVLRVFSNDKIQAANIINTMTPGDVYQTLTTRHPSAESRRYLYKVNTAQKSYRRR.

The signal sequence occupies residues 1-16 (MKKYLALALIAPLLIS). Cys-17 carries N-palmitoyl cysteine lipidation. Cys-17 is lipidated: S-diacylglycerol cysteine.

This sequence belongs to the transglycosylase Slt family.

Its subcellular location is the cell outer membrane. The catalysed reaction is Exolytic cleavage of the (1-&gt;4)-beta-glycosidic linkage between N-acetylmuramic acid (MurNAc) and N-acetylglucosamine (GlcNAc) residues in peptidoglycan, from either the reducing or the non-reducing ends of the peptidoglycan chains, with concomitant formation of a 1,6-anhydrobond in the MurNAc residue.. Its function is as follows. Murein-degrading enzyme. May play a role in recycling of muropeptides during cell elongation and/or cell division. This chain is Membrane-bound lytic murein transglycosylase C, found in Shigella flexneri serotype 5b (strain 8401).